A 434-amino-acid chain; its full sequence is Probable phosphoglucosamine mutase (434 aa).

The active-site Phosphoserine intermediate is the Ser-91. Residues Ser-91, Asp-229, Asp-231, and Asp-233 each contribute to the Mg(2+) site. The residue at position 91 (Ser-91) is a Phosphoserine.

This sequence belongs to the phosphohexose mutase family. Requires Mg(2+) as cofactor. Activated by phosphorylation.

The catalysed reaction is alpha-D-glucosamine 1-phosphate = D-glucosamine 6-phosphate. Its function is as follows. Catalyzes the conversion of glucosamine-6-phosphate to glucosamine-1-phosphate. In Methanosarcina acetivorans (strain ATCC 35395 / DSM 2834 / JCM 12185 / C2A), this protein is Probable phosphoglucosamine mutase.